The following is a 536-amino-acid chain: Caspase recruitment domain-containing protein 9 (536 aa).

The residue at position 2 (Ser2) is a Phosphoserine. 3 residues coordinate Zn(2+): Asp3, Cys10, and His73. The region spanning 6–98 is the CARD domain; it reads NDDECWSTLE…QLYRKVTGKE (93 aa). Positions 99–116 are linker; it reads PARVFSMIIDASGESGLT. Residues 117 to 272 are a coiled coil; the sequence is QLLMTEVMKL…ELQVSVQEGK (156 aa). Lys125 participates in a covalent cross-link: Glycyl lysine isopeptide (Lys-Gly) (interchain with G-Cter in ubiquitin). Thr231 is modified (phosphothreonine; by PKC/PRKCD). Ser277 is modified (phosphoserine). The stretch at 303–415 forms a coiled coil; that stretch reads SLRKDLRQAE…LLAAEGRLKQ (113 aa). A phosphoserine mark is found at Ser424, Ser425, Ser431, Ser451, Ser461, Ser483, and Ser498. The segment at 425 to 451 is disordered; the sequence is SDLEDSSPRNSQELSLPQDLEEDAQLS. Residues 476–536 are disordered; that stretch reads LTHGMGPSSS…GSDNTDTEGS (61 aa). Over residues 487 to 502 the composition is skewed to basic and acidic residues; sequence PPEKERRRLKESFENY. Thr531 and Thr533 each carry phosphothreonine; by CK2.

In terms of assembly, monomer. Homodimer; homodimerization is mediated by the CARD domain which forms an extensive interaction with the adjacent linker and coiled-coil regions; leads to an autoinhibited state. Homomultimer; polymerizes following activation, forming a nucleating helical template that seeds BCL10-filament formation via a CARD-CARD interaction. Interacts (via CARD domain) with BCL10 (via CARD domain); interaction takes place following CARD9 activation and polymerization, leading to the formation of a filamentous CBM complex assembly. Component of a CBM complex (CARD9-BCL10, MALT1), composed of CARD9, BCL10 and MALT1. Interacts with RASGRF1. Interacts with NOD2 (via NACHT domain); interaction is direct. Interacts with RIPK2. Interacts with VHL; without leading to protein degradation. Phosphorylated at Thr-231 by PRKCD downstream of C-type lectin receptors activation: phosphorylation promotes interaction with BCL10, followed by activation of NF-kappa-B and MAP kinase p38 pathways. Phosphorylated at Thr-531 and Thr-531 by CK2 following interaction with VHL, leading to inhibit the ability to activate NF-kappa-B. Post-translationally, ubiquitinated at Lys-125 via 'Lys-27'-linked ubiquitin by TRIM62 downstream of C-type lectin receptors activation; leading to CARD9 activation, followed by activation of NF-kappa-B and MAP kinase p38 pathways. Deubiquitinated at Lys-125 by USP15, inhibiting CARD9. As to expression, specifically expressed in myeloid cells. Not expressed in non-lymphoid organs.

It is found in the cytoplasm. With respect to regulation, maintained in an autoinhibited state via homodimerization in which the CARD domain forms an extensive interaction with the adjacent linker and coiled-coil regions. Activation downstream of C-type lectin receptors, by phosphorylation by PRKCD and/or ubiquitination by TRIM62, triggers disruption of the CARD domain-coiled coil interface, CARD9 homooligomerization and BCL10 recruitment, followed by activation of NF-kappa-B and MAP kinase p38 pathways. Zinc-binding inhibits activation by stabilizing the CARD ground-state conformation and restricting its capacity to form BCL10-nucleating filaments. Adapter protein that plays a key role in innate immune response against fungi by forming signaling complexes downstream of C-type lectin receptors. CARD9-mediated signals are essential for antifungal immunity against a subset of fungi from the phylum Ascomycota. Transduces signals in myeloid cells downstream of C-type lectin receptors CLEC7A (dectin-1), CLEC6A (dectin-2) and CLEC4E (Mincle), which detect pathogen-associated molecular pattern metabolites (PAMPs), such as fungal carbohydrates, and trigger CARD9 activation. Upon activation, CARD9 homooligomerizes to form a nucleating helical template that recruits BCL10 via CARD-CARD interaction, thereby promoting polymerization of BCL10 and subsequent recruitment of MALT1: this leads to activation of NF-kappa-B and MAP kinase p38 (MAPK11, MAPK12, MAPK13 and/or MAPK14) pathways which stimulate expression of genes encoding pro-inflammatory cytokines and chemokines. CARD9 signaling in antigen-presenting cells links innate sensing of fungi to the activation of adaptive immunity and provides a cytokine milieu that induces the development and subsequent of interleukin 17-producing T helper (Th17) cells. Also involved in activation of myeloid cells via classical ITAM-associated receptors and TLR: required for TLR-mediated activation of MAPK, while it is not required for TLR-induced activation of NF-kappa-B. CARD9 can also be engaged independently of BCL10: forms a complex with RASGRF1 downstream of C-type lectin receptors, which recruits and activates HRAS, leading to ERK activation and the production of cytokines. Acts as an important regulator of the intestinal commensal fungi (mycobiota) component of the gut microbiota. Plays an essential role in antifungal immunity against dissemination of gut fungi: acts by promoting induction of antifungal IgG antibodies response in CX3CR1(+) macrophages to confer protection against disseminated C.albicans or C.auris infection. Also mediates immunity against other pathogens, such as certain bacteria, viruses and parasites; CARD9 signaling is however redundant with other innate immune responses. In response to L.monocytogenes infection, required for the production of inflammatory cytokines activated by intracellular peptidoglycan: acts by connecting NOD2 recognition of peptidoglycan to downstream activation of MAP kinases (MAPK) without activating NF-kappa-B. The protein is Caspase recruitment domain-containing protein 9 of Mus musculus (Mouse).